A 169-amino-acid polypeptide reads, in one-letter code: Ribosome maturation factor RimM (169 aa).

The PRC barrel domain occupies 93-167 (PENSFFISDI…KISVILPKGL (75 aa)).

The protein belongs to the RimM family. Binds ribosomal protein uS19.

The protein localises to the cytoplasm. Functionally, an accessory protein needed during the final step in the assembly of 30S ribosomal subunit, possibly for assembly of the head region. Essential for efficient processing of 16S rRNA. May be needed both before and after RbfA during the maturation of 16S rRNA. It has affinity for free ribosomal 30S subunits but not for 70S ribosomes. This is Ribosome maturation factor RimM from Ruminiclostridium cellulolyticum (strain ATCC 35319 / DSM 5812 / JCM 6584 / H10) (Clostridium cellulolyticum).